The sequence spans 243 residues: Aliphatic sulfonates import ATP-binding protein SsuB (243 aa).

In terms of domain architecture, ABC transporter spans 11–230 (ATVRGLRKSY…RTHPSFASYT (220 aa)). An ATP-binding site is contributed by 43-50 (GRSGSGKS).

It belongs to the ABC transporter superfamily. Aliphatic sulfonates importer (TC 3.A.1.17.2) family. The complex is composed of two ATP-binding proteins (SsuB), two transmembrane proteins (SsuC) and a solute-binding protein (SsuA).

It is found in the cell membrane. It carries out the reaction ATP + H2O + aliphatic sulfonate-[sulfonate-binding protein]Side 1 = ADP + phosphate + aliphatic sulfonateSide 2 + [sulfonate-binding protein]Side 1.. In terms of biological role, part of the ABC transporter complex SsuABC involved in aliphatic sulfonates import. Responsible for energy coupling to the transport system. Is also involved in taurine transport. Seems to not be involved in long chain aliphatic sulfonates transport (chain length of eight carbon atoms or more). In Corynebacterium glutamicum (strain ATCC 13032 / DSM 20300 / JCM 1318 / BCRC 11384 / CCUG 27702 / LMG 3730 / NBRC 12168 / NCIMB 10025 / NRRL B-2784 / 534), this protein is Aliphatic sulfonates import ATP-binding protein SsuB.